The sequence spans 142 residues: Hemoglobin subunit beta (142 aa).

In terms of domain architecture, Globin spans 3–142; it reads KLSEDQEHYI…VAEALSSNYH (140 aa). Residues H60 and H89 each contribute to the heme b site.

Belongs to the globin family. Heterotetramer of two alpha chains and two beta chains. Red blood cells.

In terms of biological role, involved in oxygen transport from gills to the various peripheral tissues. This is Hemoglobin subunit beta (HBB) from Hemitrygon akajei (Red stingray).